The primary structure comprises 411 residues: MSILSWIENQRKLKLLNAPKYNHPESDVSQGLWTRCDHCGVILYIKHLKENQRVCFGCGYHLQMSSTERIESLVDANTWRPFDEMVSPCDPLEFRDQKAYTERLKDAQERTGLQDAVQTGTGLLDGIPIALGVMDFHFMGGSMGSVVGEKITRLIEYATQEGLPVILVCASGGARMQEGILSLMQMAKISAALHIHQNCAKLLYISVLTSPTTGGVTASFAMLGDLLFAEPKALIGFAGRRVIEQTLQEQLPDDFQTAEYLLHHGLLDLIVPRSFLKQALSETLTLYKEAPLKEQGRIPYGERGPLTKTREEQLRRFLKSSKTPEYLHIVNDLKELLGFLGQTQTTLYPEKLEFLNNLKTQEQFLQKNDNFFEELLTSTTVKKALNLACGTQTRLNWLNYKLTEFRIRPKF.

A CoA carboxyltransferase N-terminal domain is found at L32–E302. C36, C39, C55, and C58 together coordinate Zn(2+). The C4-type zinc-finger motif lies at C36–C58.

Belongs to the AccD/PCCB family. In terms of assembly, acetyl-CoA carboxylase is a heterohexamer composed of biotin carboxyl carrier protein, biotin carboxylase and 2 subunits each of ACCase subunit alpha and ACCase plastid-coded subunit beta (accD). It depends on Zn(2+) as a cofactor.

Its subcellular location is the plastid. The protein localises to the chloroplast stroma. It catalyses the reaction N(6)-carboxybiotinyl-L-lysyl-[protein] + acetyl-CoA = N(6)-biotinyl-L-lysyl-[protein] + malonyl-CoA. It functions in the pathway lipid metabolism; malonyl-CoA biosynthesis; malonyl-CoA from acetyl-CoA: step 1/1. Component of the acetyl coenzyme A carboxylase (ACC) complex. Biotin carboxylase (BC) catalyzes the carboxylation of biotin on its carrier protein (BCCP) and then the CO(2) group is transferred by the transcarboxylase to acetyl-CoA to form malonyl-CoA. The protein is Acetyl-coenzyme A carboxylase carboxyl transferase subunit beta, chloroplastic of Chlorella vulgaris (Green alga).